A 292-amino-acid polypeptide reads, in one-letter code: Tricin synthase 2 (292 aa).

The tract at residues 21 to 46 (RTTPASRVSSTAMAAANGDASHGANG) is disordered. Positions 23 to 32 (TPASRVSSTA) are enriched in polar residues. S-adenosyl-L-methionine contacts are provided by residues Ser-108, Glu-130, 132–133 (GV), Ser-138, Asp-156, and Ala-185. Asp-208 provides a ligand contact to a divalent metal cation. Asp-210 contributes to the S-adenosyl-L-methionine binding site. Residues Asp-234 and Asn-235 each contribute to the a divalent metal cation site.

The protein belongs to the class I-like SAM-binding methyltransferase superfamily. Cation-dependent O-methyltransferase family. CCoAMT subfamily. Mg(2+) is required as a cofactor. The cofactor is Mn(2+). As to expression, expressed in stems only.

The catalysed reaction is tricetin + 2 S-adenosyl-L-methionine = 3',5'-di-O-methyltricetin + 2 S-adenosyl-L-homocysteine + 2 H(+). In terms of biological role, catalyzes the stepwise methylation of tricetin to its 3'-mono- and 3',5'-dimethyl ethers. No 3',4',5'-trimethylated ester derivatives are produced. Can use caffeoyl CoA, 5-hydroxyferulic acid, luteolin, tricetin, quercetin, myrcetin and 7,8-dihydroxyflavone as substrates, but not naringenin, apigenin or kaempferol. The 2,3-double bond and the O-dihydroxyl group of the substrate are both required for catalytic activity of the enzyme. The sequence is that of Tricin synthase 2 (ROMT-17) from Oryza sativa subsp. japonica (Rice).